The chain runs to 211 residues: Transcriptional regulator GfcR (211 aa).

This sequence belongs to the purine/pyrimidine phosphoribosyltransferase family. GfcR subfamily.

In terms of biological role, DNA-binding transcriptional regulator that functions as a regulator of central sugar catabolic pathways. The polypeptide is Transcriptional regulator GfcR (Halorubrum lacusprofundi (strain ATCC 49239 / DSM 5036 / JCM 8891 / ACAM 34)).